The primary structure comprises 206 residues: Large ribosomal subunit protein uL4 (206 aa).

A compositionally biased stretch (basic residues) spans 65–76; the sequence is KQKGTGRARHSS. The disordered stretch occupies residues 65–94; that stretch reads KQKGTGRARHSSARAPQFRGGGKAHGPVVR.

It belongs to the universal ribosomal protein uL4 family. Part of the 50S ribosomal subunit.

Functionally, one of the primary rRNA binding proteins, this protein initially binds near the 5'-end of the 23S rRNA. It is important during the early stages of 50S assembly. It makes multiple contacts with different domains of the 23S rRNA in the assembled 50S subunit and ribosome. Forms part of the polypeptide exit tunnel. The chain is Large ribosomal subunit protein uL4 from Bartonella quintana (strain Toulouse) (Rochalimaea quintana).